The following is a 282-amino-acid chain: Bis(5'-nucleosyl)-tetraphosphatase, symmetrical (282 aa).

This sequence belongs to the Ap4A hydrolase family.

It catalyses the reaction P(1),P(4)-bis(5'-adenosyl) tetraphosphate + H2O = 2 ADP + 2 H(+). Functionally, hydrolyzes diadenosine 5',5'''-P1,P4-tetraphosphate to yield ADP. The sequence is that of Bis(5'-nucleosyl)-tetraphosphatase, symmetrical from Burkholderia thailandensis (strain ATCC 700388 / DSM 13276 / CCUG 48851 / CIP 106301 / E264).